The sequence spans 553 residues: Dihydroxy-acid dehydratase (553 aa).

Aspartate 78 contacts Mg(2+). Residue cysteine 119 coordinates [2Fe-2S] cluster. Mg(2+)-binding residues include aspartate 120 and lysine 121. Lysine 121 is subject to N6-carboxylysine. Cysteine 193 provides a ligand contact to [2Fe-2S] cluster. Glutamate 441 serves as a coordination point for Mg(2+). Serine 467 (proton acceptor) is an active-site residue.

The protein belongs to the IlvD/Edd family. As to quaternary structure, homodimer. The cofactor is [2Fe-2S] cluster. Mg(2+) serves as cofactor.

The enzyme catalyses (2R)-2,3-dihydroxy-3-methylbutanoate = 3-methyl-2-oxobutanoate + H2O. It catalyses the reaction (2R,3R)-2,3-dihydroxy-3-methylpentanoate = (S)-3-methyl-2-oxopentanoate + H2O. Its pathway is amino-acid biosynthesis; L-isoleucine biosynthesis; L-isoleucine from 2-oxobutanoate: step 3/4. It participates in amino-acid biosynthesis; L-valine biosynthesis; L-valine from pyruvate: step 3/4. Functionally, functions in the biosynthesis of branched-chain amino acids. Catalyzes the dehydration of (2R,3R)-2,3-dihydroxy-3-methylpentanoate (2,3-dihydroxy-3-methylvalerate) into 2-oxo-3-methylpentanoate (2-oxo-3-methylvalerate) and of (2R)-2,3-dihydroxy-3-methylbutanoate (2,3-dihydroxyisovalerate) into 2-oxo-3-methylbutanoate (2-oxoisovalerate), the penultimate precursor to L-isoleucine and L-valine, respectively. In Geobacter sulfurreducens (strain ATCC 51573 / DSM 12127 / PCA), this protein is Dihydroxy-acid dehydratase.